Reading from the N-terminus, the 188-residue chain is Xanthine phosphoribosyltransferase (188 aa).

Xanthine contacts are provided by Leu20 and Asn27. 127 to 131 (AHGEA) contributes to the 5-phospho-alpha-D-ribose 1-diphosphate binding site. Lys155 is a binding site for xanthine.

The protein belongs to the purine/pyrimidine phosphoribosyltransferase family. Xpt subfamily. Homodimer.

It is found in the cytoplasm. It carries out the reaction XMP + diphosphate = xanthine + 5-phospho-alpha-D-ribose 1-diphosphate. The protein operates within purine metabolism; XMP biosynthesis via salvage pathway; XMP from xanthine: step 1/1. Converts the preformed base xanthine, a product of nucleic acid breakdown, to xanthosine 5'-monophosphate (XMP), so it can be reused for RNA or DNA synthesis. This Heliobacterium modesticaldum (strain ATCC 51547 / Ice1) protein is Xanthine phosphoribosyltransferase.